The following is a 466-amino-acid chain: Sushi repeat-containing protein SRPX2 (466 aa).

Residues methionine 1–proline 24 form the signal peptide. Sushi domains lie at alanine 70 to glutamine 120, methionine 121 to aspartate 179, and arginine 263 to proline 322. Disulfide bonds link cysteine 72–cysteine 106, cysteine 92–cysteine 118, cysteine 123–cysteine 164, and cysteine 150–cysteine 177. In terms of domain architecture, HYR spans valine 178–valine 262. 2 cysteine pairs are disulfide-bonded: cysteine 265/cysteine 307 and cysteine 293/cysteine 320.

Forms homooligomers. Interacts with PLAUR (via the UPAR/Ly6 domains), ADAMTS4 and CTSB. Interacts with HGF; the interaction increases the mitogenic activity of HGF. Contains chondroitin sulfate chains.

The protein localises to the secreted. Its subcellular location is the cytoplasm. It localises to the cell surface. It is found in the synapse. In terms of biological role, acts as a ligand for the urokinase plasminogen activator surface receptor. Plays a role in angiogenesis by inducing endothelial cell migration and the formation of vascular network (cords). Involved in cellular migration and adhesion. Increases the phosphorylation levels of FAK. Interacts with and increases the mitogenic activity of HGF. Promotes synapse formation. The protein is Sushi repeat-containing protein SRPX2 of Rattus norvegicus (Rat).